The chain runs to 293 residues: 4-diphosphocytidyl-2-C-methyl-D-erythritol kinase (293 aa).

K16 is an active-site residue. 99–109 is a binding site for ATP; sequence PMGAGLGGGSS. D141 is a catalytic residue.

The protein belongs to the GHMP kinase family. IspE subfamily.

It carries out the reaction 4-CDP-2-C-methyl-D-erythritol + ATP = 4-CDP-2-C-methyl-D-erythritol 2-phosphate + ADP + H(+). It functions in the pathway isoprenoid biosynthesis; isopentenyl diphosphate biosynthesis via DXP pathway; isopentenyl diphosphate from 1-deoxy-D-xylulose 5-phosphate: step 3/6. Its function is as follows. Catalyzes the phosphorylation of the position 2 hydroxy group of 4-diphosphocytidyl-2C-methyl-D-erythritol. This Paraburkholderia xenovorans (strain LB400) protein is 4-diphosphocytidyl-2-C-methyl-D-erythritol kinase.